The primary structure comprises 299 residues: Acetylglutamate kinase (299 aa).

Residues 64 to 65, Arg-86, and Asn-197 contribute to the substrate site; that span reads GG.

The protein belongs to the acetylglutamate kinase family. ArgB subfamily.

It localises to the cytoplasm. The enzyme catalyses N-acetyl-L-glutamate + ATP = N-acetyl-L-glutamyl 5-phosphate + ADP. The protein operates within amino-acid biosynthesis; L-arginine biosynthesis; N(2)-acetyl-L-ornithine from L-glutamate: step 2/4. Functionally, catalyzes the ATP-dependent phosphorylation of N-acetyl-L-glutamate. The polypeptide is Acetylglutamate kinase (Sulfurihydrogenibium sp. (strain YO3AOP1)).